The following is a 326-amino-acid chain: Aspartate carbamoyltransferase catalytic subunit (326 aa).

Residues R76 and T77 each contribute to the carbamoyl phosphate site. K104 is an L-aspartate binding site. Positions 126, 156, and 159 each coordinate carbamoyl phosphate. Residues R189 and R244 each coordinate L-aspartate. Carbamoyl phosphate-binding residues include G285 and P286.

This sequence belongs to the aspartate/ornithine carbamoyltransferase superfamily. ATCase family. As to quaternary structure, heterododecamer (2C3:3R2) of six catalytic PyrB chains organized as two trimers (C3), and six regulatory PyrI chains organized as three dimers (R2).

It catalyses the reaction carbamoyl phosphate + L-aspartate = N-carbamoyl-L-aspartate + phosphate + H(+). Its pathway is pyrimidine metabolism; UMP biosynthesis via de novo pathway; (S)-dihydroorotate from bicarbonate: step 2/3. In terms of biological role, catalyzes the condensation of carbamoyl phosphate and aspartate to form carbamoyl aspartate and inorganic phosphate, the committed step in the de novo pyrimidine nucleotide biosynthesis pathway. The sequence is that of Aspartate carbamoyltransferase catalytic subunit from Polynucleobacter asymbioticus (strain DSM 18221 / CIP 109841 / QLW-P1DMWA-1) (Polynucleobacter necessarius subsp. asymbioticus).